The chain runs to 529 residues: Berberine bridge enzyme-like 7 (529 aa).

The first 19 residues, 1–19 (MKEALSILCLALLVSVSEA), serve as a signal peptide directing secretion. Cys32 and Cys95 form a disulfide bridge. N-linked (GlcNAc...) asparagine glycosylation occurs at Asn52. The region spanning 69–247 (YSSPNFKKLL…LSWKINLVKV (179 aa)) is the FAD-binding PCMH-type domain. The 6-(S-cysteinyl)-8alpha-(pros-histidyl)-FAD (His-Cys) cross-link spans 110 to 172 (HDLEGLSYRS…QTLAFPAGVC (63 aa)). Asn257, Asn341, and Asn439 each carry an N-linked (GlcNAc...) asparagine glycan.

The protein belongs to the oxygen-dependent FAD-linked oxidoreductase family. The cofactor is FAD. In terms of processing, the FAD cofactor is bound via a bicovalent 6-S-cysteinyl, 8alpha-N1-histidyl FAD linkage.

It is found in the secreted. It localises to the cell wall. In terms of biological role, probable flavin-dependent oxidoreductase. This is Berberine bridge enzyme-like 7 from Arabidopsis thaliana (Mouse-ear cress).